Reading from the N-terminus, the 426-residue chain is UDP-N-acetylglucosamine 1-carboxyvinyltransferase (426 aa).

22–23 (KN) is a binding site for phosphoenolpyruvate. Arginine 94 provides a ligand contact to UDP-N-acetyl-alpha-D-glucosamine. Catalysis depends on cysteine 118, which acts as the Proton donor. Cysteine 118 is modified (2-(S-cysteinyl)pyruvic acid O-phosphothioketal). Residues 123 to 127 (RPVDL), aspartate 309, and isoleucine 331 contribute to the UDP-N-acetyl-alpha-D-glucosamine site.

Belongs to the EPSP synthase family. MurA subfamily.

It localises to the cytoplasm. The catalysed reaction is phosphoenolpyruvate + UDP-N-acetyl-alpha-D-glucosamine = UDP-N-acetyl-3-O-(1-carboxyvinyl)-alpha-D-glucosamine + phosphate. Its pathway is cell wall biogenesis; peptidoglycan biosynthesis. In terms of biological role, cell wall formation. Adds enolpyruvyl to UDP-N-acetylglucosamine. The sequence is that of UDP-N-acetylglucosamine 1-carboxyvinyltransferase from Paracoccus denitrificans (strain Pd 1222).